The chain runs to 158 residues: Cyclic pyranopterin monophosphate synthase (158 aa).

Residues 75–77 (LCH) and 113–114 (ME) contribute to the substrate site. Aspartate 128 is a catalytic residue.

This sequence belongs to the MoaC family. In terms of assembly, homohexamer; trimer of dimers.

The catalysed reaction is (8S)-3',8-cyclo-7,8-dihydroguanosine 5'-triphosphate = cyclic pyranopterin phosphate + diphosphate. The protein operates within cofactor biosynthesis; molybdopterin biosynthesis. Its function is as follows. Catalyzes the conversion of (8S)-3',8-cyclo-7,8-dihydroguanosine 5'-triphosphate to cyclic pyranopterin monophosphate (cPMP). This Ralstonia pickettii (strain 12J) protein is Cyclic pyranopterin monophosphate synthase.